Consider the following 323-residue polypeptide: Annexin A3 (323 aa).

A2 is subject to N-acetylalanine. Annexin repeat units follow at residues 18-89 (FNPS…ALVT), 90-161 (PPAV…ILAN), 173-245 (QLAR…AIVR), and 249-320 (NTPA…KICG). An N6-acetyllysine modification is found at K177. At T267 the chain carries Phosphothreonine.

The protein belongs to the annexin family.

Inhibitor of phospholipase A2, also possesses anti-coagulant properties. Also cleaves the cyclic bond of inositol 1,2-cyclic phosphate to form inositol 1-phosphate. The sequence is that of Annexin A3 (ANXA3) from Bos taurus (Bovine).